The primary structure comprises 215 residues: 3,4-dihydroxy-2-butanone 4-phosphate synthase (215 aa).

D-ribulose 5-phosphate contacts are provided by residues 38-39 (RE), Asp-43, 151-155 (RRGHT), and Glu-175. Glu-39 contributes to the Mg(2+) binding site. Position 154 (His-154) interacts with Mg(2+).

It belongs to the DHBP synthase family. As to quaternary structure, homodimer. The cofactor is Mg(2+). Mn(2+) is required as a cofactor.

It carries out the reaction D-ribulose 5-phosphate = (2S)-2-hydroxy-3-oxobutyl phosphate + formate + H(+). The protein operates within cofactor biosynthesis; riboflavin biosynthesis; 2-hydroxy-3-oxobutyl phosphate from D-ribulose 5-phosphate: step 1/1. In terms of biological role, catalyzes the conversion of D-ribulose 5-phosphate to formate and 3,4-dihydroxy-2-butanone 4-phosphate. The sequence is that of 3,4-dihydroxy-2-butanone 4-phosphate synthase from Haemophilus influenzae (strain 86-028NP).